The chain runs to 98 residues: NADH-ubiquinone oxidoreductase chain 4L (98 aa).

Helical transmembrane passes span 1 to 21 (MAPINLNLILAFSLALLGVLI), 28 to 48 (STLLCLEGMMLSLFILMTLLI), and 59 to 79 (APLILLVFSACEAGVGLALLV).

Belongs to the complex I subunit 4L family. Core subunit of respiratory chain NADH dehydrogenase (Complex I) which is composed of 45 different subunits.

Its subcellular location is the mitochondrion inner membrane. It carries out the reaction a ubiquinone + NADH + 5 H(+)(in) = a ubiquinol + NAD(+) + 4 H(+)(out). Its function is as follows. Core subunit of the mitochondrial membrane respiratory chain NADH dehydrogenase (Complex I) which catalyzes electron transfer from NADH through the respiratory chain, using ubiquinone as an electron acceptor. Part of the enzyme membrane arm which is embedded in the lipid bilayer and involved in proton translocation. This is NADH-ubiquinone oxidoreductase chain 4L (MT-ND4L) from Isoodon macrourus (Short-nosed bandicoot).